Here is a 315-residue protein sequence, read N- to C-terminus: THO complex subunit 3 (315 aa).

WD repeat units follow at residues G18–A57, G64–Q104, E106–R145, A189–T228, K231–Q270, and P272–G311.

It belongs to the THOC3 family. Component of the THO complex, which is composed of THO1, THO2, THO3, THO5, THO6 and THO7.

It localises to the nucleus. Functionally, acts as a component of the THO subcomplex of the TREX complex which is thought to couple mRNA transcription, processing and nuclear export. Contributes to the integrity of the endogenous trans-acting small interfering RNA (ta-siRNA) pathway. May process or transport a long RNA molecule so that it can be a template for secondary siRNA production. May participate in the trafficking of siRNA precursors to the ARGONAUTE catalytic center. Required for the generation of functional messenger ribonucleoproteins (mRNPs). This is THO complex subunit 3 (THO3) from Arabidopsis thaliana (Mouse-ear cress).